The sequence spans 393 residues: Chorismate synthase (393 aa).

Residues Arg48 and Arg54 each coordinate NADP(+). FMN contacts are provided by residues 125–127 (RSS), 238–239 (NA), Gly278, 293–297 (KPTSS), and Arg319. The segment at 355–393 (ACTTPKIPGHTGPREGQEEGPSDSEPKVEFADDPEPDEA) is disordered.

The protein belongs to the chorismate synthase family. In terms of assembly, homotetramer. The cofactor is FMNH2.

It catalyses the reaction 5-O-(1-carboxyvinyl)-3-phosphoshikimate = chorismate + phosphate. Its pathway is metabolic intermediate biosynthesis; chorismate biosynthesis; chorismate from D-erythrose 4-phosphate and phosphoenolpyruvate: step 7/7. In terms of biological role, catalyzes the anti-1,4-elimination of the C-3 phosphate and the C-6 proR hydrogen from 5-enolpyruvylshikimate-3-phosphate (EPSP) to yield chorismate, which is the branch point compound that serves as the starting substrate for the three terminal pathways of aromatic amino acid biosynthesis. This reaction introduces a second double bond into the aromatic ring system. The protein is Chorismate synthase of Nitrosospira multiformis (strain ATCC 25196 / NCIMB 11849 / C 71).